We begin with the raw amino-acid sequence, 636 residues long: MYNKRIKRVLPPEEMVTDSKQESGGQKNGDKTGFDATDLKPYLLKDPETMAMNFARALENLGQAASAWLAPRERGEITETAIDPMTDMVKTLSKISEYWISDPRRTFEAQTQLMSSFFGIWMRSMQRMQGTRGMQGEPLPPEPDTRKDKRFSDEDWQKNPFFDFLRQVYFVTSDWVDKLVSETDGLDEHTKHKAGFYVKQITAALSPSNFIATNPQLYRETIASNGENLVRGMKMLAEDIAAGKGELRLRQTDMTKFAVGRDMALTPGKVIAQNDICQIIQYEASTETVLKRPLLICPPWINKFYILDLNPQKSFIKWCVDQGQTVFVISWVNPDGRHAEKDWAAYAREGIDFALETIEKATGEKEVNAVGYCVGGTLLAATLALHAKEKNKRIKTATLFTTQVDFTHAGDLKVFVDEEQLAALEEHMQAAGYLDGSKMSMAFNMLRASELIWPYFVNSYLKGQEPLPFDLLFWNADSTRMAAANHAFYLRNCYLRNALTQNEMILDGKRISLKDVKIPIYNLATREDHIAPAKSVFLGSRFFGGKVEFVVTGSGHIAGVVNPPDKRKYQFWTGGPAKGEYETWLEQASETPGSWWPHWQAWIETHDGRRVAARKPGGDALNAIEEAPGSYVMERT.

Disordered regions lie at residues Met-1–Asp-38 and Gln-129–Ser-152. Residues Pro-143 to Ser-152 show a composition bias toward basic and acidic residues. Cys-373 is an active-site residue.

The protein belongs to the PHA/PHB synthase family. Type I PhaC subfamily.

The protein localises to the cytoplasm. The enzyme catalyses (3R)-3-hydroxybutanoyl-CoA + [(3R)-hydroxybutanoate](n) = [(3R)-hydroxybutanoate](n+1) + CoA. The protein operates within biopolymer metabolism; poly-(R)-3-hydroxybutanoate biosynthesis. Its function is as follows. Polymerizes D(-)-3-hydroxybutyryl-CoA to create PHB which consists of thousands of hydroxybutyrate molecules linked end to end. PHB serves as an intracellular energy reserve material when cells grow under conditions of nutrient limitation. This chain is Poly(3-hydroxyalkanoate) polymerase subunit PhaC, found in Rhizobium etli (strain ATCC 51251 / DSM 11541 / JCM 21823 / NBRC 15573 / CFN 42).